Here is a 287-residue protein sequence, read N- to C-terminus: Pyridoxal 5'-phosphate synthase subunit PdxS (287 aa).

D21 contacts D-ribose 5-phosphate. The Schiff-base intermediate with D-ribose 5-phosphate role is filled by K78. G150 lines the D-ribose 5-phosphate pocket. R162 is a binding site for D-glyceraldehyde 3-phosphate. Residues G211 and 232-233 each bind D-ribose 5-phosphate; that span reads GS.

This sequence belongs to the PdxS/SNZ family. In terms of assembly, in the presence of PdxT, forms a dodecamer of heterodimers.

It carries out the reaction aldehydo-D-ribose 5-phosphate + D-glyceraldehyde 3-phosphate + L-glutamine = pyridoxal 5'-phosphate + L-glutamate + phosphate + 3 H2O + H(+). The protein operates within cofactor biosynthesis; pyridoxal 5'-phosphate biosynthesis. Functionally, catalyzes the formation of pyridoxal 5'-phosphate from ribose 5-phosphate (RBP), glyceraldehyde 3-phosphate (G3P) and ammonia. The ammonia is provided by the PdxT subunit. Can also use ribulose 5-phosphate and dihydroxyacetone phosphate as substrates, resulting from enzyme-catalyzed isomerization of RBP and G3P, respectively. The sequence is that of Pyridoxal 5'-phosphate synthase subunit PdxS from Francisella philomiragia subsp. philomiragia (strain ATCC 25017 / CCUG 19701 / FSC 153 / O#319-036).